A 190-amino-acid polypeptide reads, in one-letter code: GTP cyclohydrolase 1 (190 aa).

Residues Cys75, His78, and Cys146 each contribute to the Zn(2+) site.

This sequence belongs to the GTP cyclohydrolase I family. In terms of assembly, toroid-shaped homodecamer, composed of two pentamers of five dimers.

The catalysed reaction is GTP + H2O = 7,8-dihydroneopterin 3'-triphosphate + formate + H(+). It functions in the pathway cofactor biosynthesis; 7,8-dihydroneopterin triphosphate biosynthesis; 7,8-dihydroneopterin triphosphate from GTP: step 1/1. In Campylobacter curvus (strain 525.92), this protein is GTP cyclohydrolase 1.